The chain runs to 212 residues: N-(5'-phosphoribosyl)anthranilate isomerase (212 aa).

Belongs to the TrpF family.

It carries out the reaction N-(5-phospho-beta-D-ribosyl)anthranilate = 1-(2-carboxyphenylamino)-1-deoxy-D-ribulose 5-phosphate. It functions in the pathway amino-acid biosynthesis; L-tryptophan biosynthesis; L-tryptophan from chorismate: step 3/5. This chain is N-(5'-phosphoribosyl)anthranilate isomerase (trpF), found in Cereibacter sphaeroides (strain ATCC 17023 / DSM 158 / JCM 6121 / CCUG 31486 / LMG 2827 / NBRC 12203 / NCIMB 8253 / ATH 2.4.1.) (Rhodobacter sphaeroides).